Consider the following 511-residue polypeptide: 3-octaprenyl-4-hydroxybenzoate carboxy-lyase (511 aa).

Asn176 contributes to the Mn(2+) binding site. Prenylated FMN contacts are provided by residues 179-181 (IYR), 193-195 (RWL), and 198-199 (RG). Glu242 provides a ligand contact to Mn(2+). Catalysis depends on Asp311, which acts as the Proton donor.

It belongs to the UbiD family. Homohexamer. Prenylated FMN is required as a cofactor. It depends on Mn(2+) as a cofactor.

Its subcellular location is the cell membrane. It catalyses the reaction a 4-hydroxy-3-(all-trans-polyprenyl)benzoate + H(+) = a 2-(all-trans-polyprenyl)phenol + CO2. Its pathway is cofactor biosynthesis; ubiquinone biosynthesis. Catalyzes the decarboxylation of 3-octaprenyl-4-hydroxy benzoate to 2-octaprenylphenol, an intermediate step in ubiquinone biosynthesis. This chain is 3-octaprenyl-4-hydroxybenzoate carboxy-lyase, found in Laribacter hongkongensis (strain HLHK9).